A 2185-amino-acid polypeptide reads, in one-letter code: Genome polyprotein (2185 aa).

A lipid anchor (N-myristoyl glycine; by host) is attached at G2. The Cytoplasmic segment spans residues 2 to 1495; it reads GAQVSTQKTG…HVSRAFICLQ (1494 aa). The interval 566–582 is amphipathic alpha-helix; the sequence is FYQGPPGEAVERAIARV. Residues H872 and D890 each act as for protease 2A activity in the active site. C907 and C909 together coordinate Zn(2+). C961 serves as the catalytic For protease 2A activity. C967 and H969 together coordinate Zn(2+). The tract at residues 1101–1173 is membrane-binding; that stretch reads NNNWLKKFTE…EQSAPSQSDQ (73 aa). An oligomerization region spans residues 1101 to 1239; it reads NNNWLKKFTE…SPGAGKSVAT (139 aa). Residues 1122-1126 form an RNA-binding region; that stretch reads AVKIQ. Residues 1205 to 1361 form the SF3 helicase domain; the sequence is EKKMSNYIQF…SMYSQNGKIN (157 aa). C1369, C1381, and C1386 together coordinate Zn(2+). The C4-type; degenerate zinc finger occupies 1369-1386; the sequence is CDEECCPVNFKRCCPLVC. An RNA-binding region spans residues 1413–1420; sequence EYNHRHSV. The tract at residues 1424–1429 is oligomerization; it reads LEALFQ. Residues 1496 to 1511 lie within the membrane without spanning it; the sequence is ALTTFVSVAGIIYIIY. At 1512–2185 the chain is on the cytoplasmic side; the sequence is KLFAGFQGAY…TLRRKWLDSF (674 aa). The residue at position 1521 (Y1521) is an O-(5'-phospho-RNA)-tyrosine. Residues 1541–1719 enclose the Peptidase C3 domain; sequence GPAFEFAVAM…FSAALLKHYF (179 aa). Residues H1580, E1611, and C1687 each act as for protease 3C activity in the active site. Residues 1950-2066 form the RdRp catalytic domain; that stretch reads GHLIAFDYSG…SYPWPIDASL (117 aa). Residues D1956 and D2052 each contribute to the Mg(2+) site.

It belongs to the picornaviruses polyprotein family. In terms of assembly, interacts with capsid protein VP1 and capsid protein VP3 to form heterotrimeric protomers. As to quaternary structure, interacts with capsid protein VP0, and capsid protein VP3 to form heterotrimeric protomers. Five protomers subsequently associate to form pentamers which serve as building blocks for the capsid. Interacts with capsid protein VP2, capsid protein VP3 and capsid protein VP4 following cleavage of capsid protein VP0. Interacts with capsid protein VP1 and capsid protein VP3 in the mature capsid. In terms of assembly, interacts with capsid protein VP0 and capsid protein VP1 to form heterotrimeric protomers. Five protomers subsequently associate to form pentamers which serve as building blocks for the capsid. Interacts with capsid protein VP4 in the mature capsid. Interacts with protein 2C; this interaction may be important for virion morphogenesis. As to quaternary structure, interacts with capsid protein VP1 and capsid protein VP3. Homodimer. In terms of assembly, homohexamer; forms a hexameric ring structure with 6-fold symmetry characteristic of AAA+ ATPases. Interacts (via N-terminus) with host RTN3 (via reticulon domain); this interaction is important for viral replication. Interacts with capsid protein VP3; this interaction may be important for virion morphogenesis. As to quaternary structure, interacts with protein 3CD. Homodimer. Interacts with host GBF1. Interacts (via GOLD domain) with host ACBD3 (via GOLD domain); this interaction allows the formation of a viral protein 3A/ACBD3 heterotetramer with a 2:2 stoichiometry, which will stimulate the recruitment of host PI4KB in order to synthesize PI4P at the viral RNA replication sites. In terms of assembly, interacts with RNA-directed RNA polymerase. As to quaternary structure, interacts with protein 3AB and with RNA-directed RNA polymerase. Interacts with Viral protein genome-linked and with protein 3CD. Requires Mg(2+) as cofactor. Specific enzymatic cleavages in vivo by the viral proteases yield processing intermediates and the mature proteins. In terms of processing, myristoylation is required for the formation of pentamers during virus assembly. Further assembly of 12 pentamers and a molecule of genomic RNA generates the provirion. Post-translationally, during virion maturation, immature virions are rendered infectious following cleavage of VP0 into VP4 and VP2. This maturation seems to be an autocatalytic event triggered by the presence of RNA in the capsid and it is followed by a conformational change infectious virion. Myristoylation is required during RNA encapsidation and formation of the mature virus particle. In terms of processing, VPg is uridylylated by the polymerase into VPg-pUpU. This acts as a nucleotide-peptide primer for the genomic RNA replication.

The protein localises to the virion. The protein resides in the host cytoplasm. Its subcellular location is the host cytoplasmic vesicle membrane. It localises to the host nucleus. It catalyses the reaction a ribonucleoside 5'-triphosphate + H2O = a ribonucleoside 5'-diphosphate + phosphate + H(+). It carries out the reaction Selective cleavage of Tyr-|-Gly bond in the picornavirus polyprotein.. The enzyme catalyses RNA(n) + a ribonucleoside 5'-triphosphate = RNA(n+1) + diphosphate. The catalysed reaction is Selective cleavage of Gln-|-Gly bond in the poliovirus polyprotein. In other picornavirus reactions Glu may be substituted for Gln, and Ser or Thr for Gly.. Its activity is regulated as follows. Replication or transcription is subject to high level of random mutations by the nucleotide analog ribavirin. Forms an icosahedral capsid of pseudo T=3 symmetry with capsid proteins VP2 and VP3. The capsid is 300 Angstroms in diameter, composed of 60 copies of each capsid protein and enclosing the viral positive strand RNA genome. Capsid protein VP1 mainly forms the vertices of the capsid. Capsid protein VP1 interacts with host cell receptor to provide virion attachment to target host cells. This attachment induces virion internalization. Tyrosine kinases are probably involved in the entry process. After binding to its receptor, the capsid undergoes conformational changes. Capsid protein VP1 N-terminus (that contains an amphipathic alpha-helix) and capsid protein VP4 are externalized. Together, they shape a pore in the host membrane through which viral genome is translocated to host cell cytoplasm. Its function is as follows. Forms an icosahedral capsid of pseudo T=3 symmetry with capsid proteins VP2 and VP3. The capsid is 300 Angstroms in diameter, composed of 60 copies of each capsid protein and enclosing the viral positive strand RNA genome. In terms of biological role, lies on the inner surface of the capsid shell. After binding to the host receptor, the capsid undergoes conformational changes. Capsid protein VP4 is released, Capsid protein VP1 N-terminus is externalized, and together, they shape a pore in the host membrane through which the viral genome is translocated into the host cell cytoplasm. Functionally, component of immature procapsids, which is cleaved into capsid proteins VP4 and VP2 after maturation. Allows the capsid to remain inactive before the maturation step. Cysteine protease that cleaves viral polyprotein and specific host proteins. It is responsible for the autocatalytic cleavage between the P1 and P2 regions, which is the first cleavage occurring in the polyprotein. Also cleaves the host translation initiation factor EIF4G1, in order to shut down the capped cellular mRNA translation. Inhibits the host nucleus-cytoplasm protein and RNA trafficking by cleaving host members of the nuclear pores. Counteracts stress granule formation probably by antagonizing its assembly or promoting its dissassembly. Cleaves and inhibits host IFIH1/MDA5, thereby inhibiting the type-I IFN production and the establishment of the antiviral state. Cleaves and inhibits host MAVS, thereby inhibiting the type-I IFN production and the establishment of the antiviral state. Its function is as follows. Plays an essential role in the virus replication cycle by acting as a viroporin. Creates a pore in the host endoplasmic reticulum and as a consequence releases Ca2+ in the cytoplasm of infected cell. In turn, high levels of cytoplasmic calcium may trigger membrane trafficking and transport of viral ER-associated proteins to viroplasms, sites of viral genome replication. In terms of biological role, induces and associates with structural rearrangements of intracellular membranes. Displays RNA-binding, nucleotide binding and NTPase activities. May play a role in virion morphogenesis and viral RNA encapsidation by interacting with the capsid protein VP3. Functionally, localizes the viral replication complex to the surface of membranous vesicles. Together with protein 3CD binds the Cis-Active RNA Element (CRE) which is involved in RNA synthesis initiation. Acts as a cofactor to stimulate the activity of 3D polymerase, maybe through a nucleid acid chaperone activity. Localizes the viral replication complex to the surface of membranous vesicles. It inhibits host cell endoplasmic reticulum-to-Golgi apparatus transport and causes the disassembly of the Golgi complex, possibly through GBF1 interaction. This would result in depletion of MHC, trail receptors and IFN receptors at the host cell surface. Plays an essential role in viral RNA replication by recruiting ACBD3 and PI4KB at the viral replication sites, thereby allowing the formation of the rearranged membranous structures where viral replication takes place. Its function is as follows. Acts as a primer for viral RNA replication and remains covalently bound to viral genomic RNA. VPg is uridylylated prior to priming replication into VPg-pUpU. The oriI viral genomic sequence may act as a template for this. The VPg-pUpU is then used as primer on the genomic RNA poly(A) by the RNA-dependent RNA polymerase to replicate the viral genome. During genome replication, the VPg-RNA linkage is removed by the host TDP2, thereby accelerating replication. During the late stage of the replication cycle, host TDP2 is excluded from sites of viral RNA synthesis and encapsidation, allowing for the generation of progeny virions. In terms of biological role, involved in the viral replication complex and viral polypeptide maturation. It exhibits protease activity with a specificity and catalytic efficiency that is different from protease 3C. Protein 3CD lacks polymerase activity. Protein 3CD binds to the 5'UTR of the viral genome. Functionally, replicates the viral genomic RNA on the surface of intracellular membranes. May form linear arrays of subunits that propagate along a strong head-to-tail interaction called interface-I. Covalently attaches UMP to a tyrosine of VPg, which is used to prime RNA synthesis. The positive stranded RNA genome is first replicated at virus induced membranous vesicles, creating a dsRNA genomic replication form. This dsRNA is then used as template to synthesize positive stranded RNA genomes. ss(+)RNA genomes are either translated, replicated or encapsidated. Major viral protease that mediates proteolytic processing of the polyprotein. Cleaves host EIF5B, contributing to host translation shutoff. Also cleaves host PABPC1, contributing to host translation shutoff. Cleaves host NLRP1, triggers host N-glycine-mediated degradation of the autoinhibitory NLRP1 N-terminal fragment. This is Genome polyprotein from Homo sapiens (Human).